Here is a 384-residue protein sequence, read N- to C-terminus: BTB and MATH domain-containing protein 34 (384 aa).

Residues 41–127 (LNGNTTLKRI…ELKFQKEQLK (87 aa)) are a coiled coil. The MATH domain maps to 167–277 (EFSHTFNSVA…VFNFGEYEEI (111 aa)). The 64-residue stretch at 317–380 (SDAVMIVKDE…LYGEPALTGR (64 aa)) folds into the BTB domain.

In Caenorhabditis elegans, this protein is BTB and MATH domain-containing protein 34 (bath-34).